Consider the following 597-residue polypeptide: Elongation factor 4 (597 aa).

The tr-type G domain maps to 2–184; the sequence is KNIRNFSIIA…EVVNKIPPPK (183 aa). GTP contacts are provided by residues 14–19 and 131–134; these read DHGKST and NKID.

This sequence belongs to the TRAFAC class translation factor GTPase superfamily. Classic translation factor GTPase family. LepA subfamily.

Its subcellular location is the cell inner membrane. It catalyses the reaction GTP + H2O = GDP + phosphate + H(+). In terms of biological role, required for accurate and efficient protein synthesis under certain stress conditions. May act as a fidelity factor of the translation reaction, by catalyzing a one-codon backward translocation of tRNAs on improperly translocated ribosomes. Back-translocation proceeds from a post-translocation (POST) complex to a pre-translocation (PRE) complex, thus giving elongation factor G a second chance to translocate the tRNAs correctly. Binds to ribosomes in a GTP-dependent manner. In Chromobacterium violaceum (strain ATCC 12472 / DSM 30191 / JCM 1249 / CCUG 213 / NBRC 12614 / NCIMB 9131 / NCTC 9757 / MK), this protein is Elongation factor 4.